The sequence spans 505 residues: Xylose import ATP-binding protein XylG (505 aa).

ABC transporter domains are found at residues Leu6 to Glu243 and Val262 to Lys505. An ATP-binding site is contributed by Gly38–Ser45.

Belongs to the ABC transporter superfamily. Xylose importer (TC 3.A.1.2.4) family. The complex is composed of two ATP-binding proteins (XylG), two transmembrane proteins (XylH) and a solute-binding protein (XylF).

The protein resides in the cell membrane. The enzyme catalyses D-xylose(out) + ATP + H2O = D-xylose(in) + ADP + phosphate + H(+). Part of the ABC transporter complex XylFGH involved in xylose import. Responsible for energy coupling to the transport system. In Thermoanaerobacter pseudethanolicus (strain ATCC 33223 / 39E) (Clostridium thermohydrosulfuricum), this protein is Xylose import ATP-binding protein XylG.